A 412-amino-acid polypeptide reads, in one-letter code: MHKLFAVRSLSSAIVKSFKSLQNQQAAFSTSLLLDDTQKQFKESVAKFAQENIAPYAEKIDRTNSFPKEINLWKLMGDFNLHGITAPEEYGGLNLGYLYHCIALEEISRASGAVAVSYGVQSNVCINQLVRNGTPDQKQKYLPKLISGDHIGALAMSEPNAGSDVVSMKCRADRVDGGYVLNGNKMWCTNGPVANTLIVYAKTDTTAGSKGITAFIIEKEMPGFSTAQKLDKLGMRGSDTCELVFENCFVPNENVLGQEGKGVYVLMSGLDLERLVLAAGPVGIMQACMDIVIPYVRQREQFGRPIGEFQLIQGKLADMYTALQSSRSYVYAVAKDCDNGKIDPKDCSGTILLAAERATQVALQAIQCLGGNGYINEYPTGRLLRDAKMYEIAAGTSEIRRLVIGRELFKHQ.

Residues 1–25 (MHKLFAVRSLSSAIVKSFKSLQNQQ) constitute a mitochondrion transit peptide. FAD-binding positions include 154–163 (LAMSEPNAGS) and 187–189 (WCT). Residue Ser163 coordinates substrate. Residues 209–210 (SK), Tyr264, and 271–274 (DLER) contribute to the substrate site. Glu273 acts as the Proton acceptor in catalysis. FAD is bound by residues Arg299, Gln310, and 367-371 (QCLGG). Residue 394 to 395 (AG) participates in substrate binding. An FAD-binding site is contributed by 396-398 (TSE).

Belongs to the acyl-CoA dehydrogenase family. In terms of assembly, homotetramer. FAD is required as a cofactor. As to expression, expressed in flowers.

It is found in the mitochondrion. The enzyme catalyses 2-methylbutanoyl-CoA + oxidized [electron-transfer flavoprotein] + H(+) = (2E)-2-methylbut-2-enoyl-CoA + reduced [electron-transfer flavoprotein]. Short/branched-chain acyl-CoA dehydrogenase (SBCAD). Uses 2-methylbutanoyl-CoA as substrate. Minor activity with the straight-chain substrates, butanoyl-CoA, valeryl-CoA, hexanoyl-CoA, and octanoyl-CoA but no activity with isovaleryl-CoA. In Solanum tuberosum (Potato), this protein is 2-methylacyl-CoA dehydrogenase, mitochondrial (2MBCD).